The following is a 260-amino-acid chain: MKGISRMSIREVSEVLNTEPSEEFLKACAQDERLGIQNLIVRYYKEWEARLVEAERIEALLREEKQLWLNGYLHIAGIDEAGRGPLAGPVVAATCILPAKFNLPGLNDSKKLTESKREKLFQQIKEQAIGYAVGSAEPAEIDGLNILQATKLAMKRAVEGLKVRPHFLLIDALELPSLKIPQKGIIDGDALSASIAAASILAKVSRDHLMGELDKLYPEYGFAKNKGYGTREHLMALRRHGVSPIHRRSFAPVQQQLDIV.

One can recognise an RNase H type-2 domain in the interval L73 to V260. 3 residues coordinate a divalent metal cation: D79, E80, and D171.

This sequence belongs to the RNase HII family. Mn(2+) is required as a cofactor. Mg(2+) serves as cofactor.

It is found in the cytoplasm. The catalysed reaction is Endonucleolytic cleavage to 5'-phosphomonoester.. Its function is as follows. Endonuclease that specifically degrades the RNA of RNA-DNA hybrids. This is Ribonuclease HII from Desulfitobacterium hafniense (strain DSM 10664 / DCB-2).